The sequence spans 748 residues: MIRDLSKMYRRRAHPAPHQPAQPFKFTISESCDRIKEEFQFLQAQYHSLKLECEKLASEKTEMQRHYVMYYEMSYGLNIEMHKQAEIVKRLNAICAQVIPCLSQEQQQLQAQHLLTWTWSACASDTTPLGFSQPFHPSGSSAGLLALSSALGGQSHLPIKDEKKHHDNDHQRDRDSIKSSSVSPSASFRGSEKHRNSTDYSSESKKQKTEEKEIAARYDSDGEKSDDNLVVDVSNEDPSSPRGSPAHSPRENGLDKTRLLKKDAPISPASVASSSSTPSSKSKELSLNEKSTTPVSKSNTPTPRTDAPTPGSNSTPGLRPVPGKPPGVDPLASSLRTPMAVPCPYPTPFGIVPHAGMNGELTSPGAAYAGLHNISPQMSAAAAAAAAAAAYGRSPVVGFDPHHHMRVPAIPPNLTGIPGGKPAYSFHVSADGQMQPVPFPPDALIGPGIPRHARQINTLNHGEVVCAVTISNPTRHVYTGGKGCVKVWDITDPGNKSPVSQLDCLNRDNYIRSCRLLPDGRTLIVGGEASTLSIWDLAAPTPRIKAELTSSAPACYALAISPDSKVCFSCCSDGNIAVWDLHNQTLVRQFQGHTDGASCIDISNDGTKLWTGGLDNTVRSWDLREGRQLQQHDFTSQIFSLGYCPTGEWLAVGMENSNVEVLHVTKPDKYQLHLHESCVLSLKFAHCGKWFVRPGKDNLLNAWRTPYGASIFQSKESSSVLSCDISADDKYIVTGSGDKKATVYEVIY.

Disordered regions lie at residues 1 to 20 (MIRD…PHQP) and 157 to 332 (LPIK…DPLA). The segment at 1-112 (MIRDLSKMYR…SQEQQQLQAQ (112 aa)) is q domain. A GP domain region spans residues 113–179 (HLLTWTWSAC…HQRDRDSIKS (67 aa)). Over residues 158–177 (PIKDEKKHHDNDHQRDRDSI) the composition is skewed to basic and acidic residues. The span at 178-189 (KSSSVSPSASFR) shows a compositional bias: low complexity. Positions 180 to 249 (SSVSPSASFR…SPRGSPAHSP (70 aa)) are ccN domain. 4 positions are modified to phosphoserine: Ser183, Ser187, Ser191, and Ser197. The segment covering 190–227 (GSEKHRNSTDYSSESKKQKTEEKEIAARYDSDGEKSDD) has biased composition (basic and acidic residues). Position 212 is an N6-acetyllysine (Lys212). Ser220 carries the phosphoserine modification. Ser225 carries the post-translational modification Phosphoserine; by CK2. Residue Ser240 is modified to Phosphoserine; by CDK1. 2 positions are modified to phosphoserine: Ser244 and Ser248. Positions 248–264 (SPRENGLDKTRLLKKDA) are enriched in basic and acidic residues. Positions 250–427 (RENGLDKTRL…PGGKPAYSFH (178 aa)) are SP domain. The residue at position 256 (Lys256) is an N6-acetyllysine. Positions 265 to 280 (PISPASVASSSSTPSS) are enriched in low complexity. The residue at position 267 (Ser267) is a Phosphoserine. Polar residues predominate over residues 292–303 (TTPVSKSNTPTP). Thr293 is subject to Phosphothreonine. A phosphoserine mark is found at Ser296 and Ser298. Residues Thr300, Thr302, Thr309, and Thr315 each carry the phosphothreonine modification. Ser394 carries the post-translational modification Phosphoserine. 7 WD repeats span residues 460-498 (NHGE…NKSP), 506-545 (NRDN…PRIK), 550-589 (SSAP…LVRQ), 592-631 (GHTD…QLQQ), 633-672 (DFTS…KYQL), 674-713 (LHES…SIFQ), and 715-748 (KESS…EVIY).

This sequence belongs to the WD repeat Groucho/TLE family. In terms of assembly, homooligomer and heterooligomer with other family members. Binds PAX5, LEF1, TCF7, TCF7L1 and TCF7L2. Interacts with ZNF703; TLE4 may mediate ZNF703 transcriptional repression. Interacts with SIX3 and SIX6. Interacts with PAX2. Post-translationally, phosphorylated. PAX5 binding increases phosphorylation. In terms of processing, ubiquitinated by XIAP/BIRC4.

Its subcellular location is the nucleus. In terms of biological role, transcriptional corepressor that binds to a number of transcription factors. Inhibits the transcriptional activation mediated by PAX5, and by CTNNB1 and TCF family members in Wnt signaling. The effects of full-length TLE family members may be modulated by association with dominant-negative AES. Essential for the transcriptional repressor activity of SIX3 during retina and lens development and for SIX3 transcriptional auto-repression. Involved in transcriptional repression of GNRHR and enhances MSX1-mediated transcriptional repression of CGA/alpha-GSU. This Rattus norvegicus (Rat) protein is Transducin-like enhancer protein 4 (Tle4).